Here is a 752-residue protein sequence, read N- to C-terminus: Multifunctional tryptophan biosynthesis protein (752 aa).

One can recognise a Glutamine amidotransferase type-1 domain in the interval 3–202; that stretch reads FTLLIDNYDS…IQMKGGKWGG (200 aa). An L-glutamine-binding site is contributed by 58–60; that stretch reads GPG. Cys86 (nucleophile; for GATase activity) is an active-site residue. 136–137 lines the L-glutamine pocket; that stretch reads SL. Active-site for GATase activity residues include His176 and Glu178. Positions 231–495 are indole-3-glycerol phosphate synthase; the sequence is ILNKIHAQRL…DTKAFLRSLI (265 aa). The segment at 509 to 752 is N-(5'-phosphoribosyl)anthranilate isomerase; the sequence is LVKICGIRST…VEAFVKAVRG (244 aa).

The enzyme catalyses N-(5-phospho-beta-D-ribosyl)anthranilate = 1-(2-carboxyphenylamino)-1-deoxy-D-ribulose 5-phosphate. The catalysed reaction is 1-(2-carboxyphenylamino)-1-deoxy-D-ribulose 5-phosphate + H(+) = (1S,2R)-1-C-(indol-3-yl)glycerol 3-phosphate + CO2 + H2O. It carries out the reaction chorismate + L-glutamine = anthranilate + pyruvate + L-glutamate + H(+). Its pathway is amino-acid biosynthesis; L-tryptophan biosynthesis; L-tryptophan from chorismate: step 1/5. It functions in the pathway amino-acid biosynthesis; L-tryptophan biosynthesis; L-tryptophan from chorismate: step 3/5. The protein operates within amino-acid biosynthesis; L-tryptophan biosynthesis; L-tryptophan from chorismate: step 4/5. In terms of biological role, trifunctional enzyme bearing the Gln amidotransferase (GATase) domain of anthranilate synthase, indole-glycerolphosphate synthase, and phosphoribosylanthranilate isomerase activities. The polypeptide is Multifunctional tryptophan biosynthesis protein (TRP1) (Cryptococcus neoformans var. grubii serotype A (strain H99 / ATCC 208821 / CBS 10515 / FGSC 9487) (Filobasidiella neoformans var. grubii)).